The primary structure comprises 63 residues: Sarcotoxin-1B (63 aa).

The signal sequence occupies residues 1–23 (MNFNKVFIFVALILAVFAGQSQA). Arg62 carries the post-translational modification Arginine amide.

Belongs to the cecropin family.

It localises to the secreted. Functionally, sarcotoxins, which are potent bactericidal proteins, are produced in response to injury. They are cytotoxic to both Gram-positive and Gram-negative bacteria. The protein is Sarcotoxin-1B of Sarcophaga peregrina (Flesh fly).